The primary structure comprises 411 residues: Na(+)-translocating NADH-quinone reductase subunit F (411 aa).

Residues 6 to 26 form a helical membrane-spanning segment; sequence AIGGVAMFTLIIMGLVAIILA. The 2Fe-2S ferredoxin-type domain occupies 35–129; it reads GDVTIHINDN…DMKIEIDPEF (95 aa). [2Fe-2S] cluster-binding residues include Cys72, Cys78, Cys81, and Cys113. The FAD-binding FR-type domain maps to 132–273; the sequence is VQKWECEVIS…SGPYGEFFAK (142 aa).

This sequence belongs to the NqrF family. Composed of six subunits; NqrA, NqrB, NqrC, NqrD, NqrE and NqrF. The cofactor is [2Fe-2S] cluster. It depends on FAD as a cofactor.

The protein resides in the cell inner membrane. It catalyses the reaction a ubiquinone + n Na(+)(in) + NADH + H(+) = a ubiquinol + n Na(+)(out) + NAD(+). Functionally, NQR complex catalyzes the reduction of ubiquinone-1 to ubiquinol by two successive reactions, coupled with the transport of Na(+) ions from the cytoplasm to the periplasm. The first step is catalyzed by NqrF, which accepts electrons from NADH and reduces ubiquinone-1 to ubisemiquinone by a one-electron transfer pathway. In Psychrobacter cryohalolentis (strain ATCC BAA-1226 / DSM 17306 / VKM B-2378 / K5), this protein is Na(+)-translocating NADH-quinone reductase subunit F.